A 343-amino-acid chain; its full sequence is Probable dual-specificity RNA methyltransferase RlmN (343 aa).

The Proton acceptor role is filled by glutamate 93. Positions 99 to 320 constitute a Radical SAM core domain; that stretch reads TDDRATLCVS…NAKGVVCTIR (222 aa). A disulfide bridge links cysteine 106 with cysteine 331. Cysteine 113, cysteine 117, and cysteine 120 together coordinate [4Fe-4S] cluster. Residues 158–159, serine 190, 212–214, and histidine 288 contribute to the S-adenosyl-L-methionine site; these read GE and SLH. The active-site S-methylcysteine intermediate is cysteine 331.

This sequence belongs to the radical SAM superfamily. RlmN family. [4Fe-4S] cluster serves as cofactor.

The protein localises to the cytoplasm. It catalyses the reaction adenosine(2503) in 23S rRNA + 2 reduced [2Fe-2S]-[ferredoxin] + 2 S-adenosyl-L-methionine = 2-methyladenosine(2503) in 23S rRNA + 5'-deoxyadenosine + L-methionine + 2 oxidized [2Fe-2S]-[ferredoxin] + S-adenosyl-L-homocysteine. It carries out the reaction adenosine(37) in tRNA + 2 reduced [2Fe-2S]-[ferredoxin] + 2 S-adenosyl-L-methionine = 2-methyladenosine(37) in tRNA + 5'-deoxyadenosine + L-methionine + 2 oxidized [2Fe-2S]-[ferredoxin] + S-adenosyl-L-homocysteine. In terms of biological role, specifically methylates position 2 of adenine 2503 in 23S rRNA and position 2 of adenine 37 in tRNAs. In Parabacteroides distasonis (strain ATCC 8503 / DSM 20701 / CIP 104284 / JCM 5825 / NCTC 11152), this protein is Probable dual-specificity RNA methyltransferase RlmN.